We begin with the raw amino-acid sequence, 360 residues long: Tryptophan--tRNA ligase, mitochondrial (360 aa).

Residues 1–18 (MALFSVRKARECWRFIRA) constitute a mitochondrion transit peptide. Residues glutamine 42 and 48–51 (HLGN) each bind ATP. Aspartate 167 is a binding site for L-tryptophan. ATP contacts are provided by residues 179 to 181 (GED), valine 217, and 226 to 230 (KMSKS).

Belongs to the class-I aminoacyl-tRNA synthetase family.

It is found in the mitochondrion matrix. The protein resides in the mitochondrion. The enzyme catalyses tRNA(Trp) + L-tryptophan + ATP = L-tryptophyl-tRNA(Trp) + AMP + diphosphate + H(+). Functionally, catalyzes the attachment of tryptophan to tRNA(Trp) in a two-step reaction: tryptophan is first activated by ATP to form Trp-AMP and then transferred to the acceptor end of tRNA(Trp). This chain is Tryptophan--tRNA ligase, mitochondrial (Wars2), found in Mus musculus (Mouse).